Here is a 505-residue protein sequence, read N- to C-terminus: Maturase K (505 aa).

The protein belongs to the intron maturase 2 family. MatK subfamily.

It localises to the plastid. The protein localises to the chloroplast. In terms of biological role, usually encoded in the trnK tRNA gene intron. Probably assists in splicing its own and other chloroplast group II introns. The chain is Maturase K from Micranthes integrifolia (Wholeleaf saxifrage).